Consider the following 350-residue polypeptide: MTLEEQQAKEALDGIIKKSRVHLYKPIQIAEILYHDRCIKQLDFLNLDTYRNQSKRWRDEICRRFLGRISTSSAKFQDNLFEKNAIPPEKLAVLGTLNRQSDGGVESYIYKQFFNRFSQMSERLAYVGNTDRYSFQLSEFLNLFWLEPGLKRSIDKIYEIVVYALFDALVSELGITVSIDFPKENLFLWEEYQDFAEKIITMPKNEHLKLPAKIHRVGVTNAADRGLDMWSNFGLAIQVKHLSLDEELAEDIVSSISADRIVIVCKKAEQSVIVSLLTQIGWKSRIQNIVTEDDLISWYEKALRGQYPIAEALLENIKTEIMREFPAVNEANEFLDFAQNRGYDITVTHF.

It catalyses the reaction Endonucleolytic cleavage of DNA to give specific double-stranded fragments with terminal 5'-phosphates.. In terms of biological role, a P subtype restriction enzyme that recognizes the double-stranded sequence 5'-RGCGCY-3'; the cleavage site is unknown. The sequence is that of Type II restriction enzyme NgoBI (ngoBIR) from Neisseria gonorrhoeae.